A 219-amino-acid polypeptide reads, in one-letter code: uncharacterized protein (219 aa).

Positions 30–107 (FRLFVGNLGN…RPVKLSRATS (78 aa)) constitute an RRM domain. Basic residues predominate over residues 140 to 149 (KKIKNKHGKN). Residues 140-219 (KKIKNKHGKN…YSRASSFRRV (80 aa)) are disordered. Over residues 150–169 (SSKSSRAAQSAAAELISSSS) the composition is skewed to low complexity. Over residues 176-186 (ANSTSVPNAVN) the composition is skewed to polar residues.

This is an uncharacterized protein from Schizosaccharomyces pombe (strain 972 / ATCC 24843) (Fission yeast).